The sequence spans 817 residues: Putative receptor protein kinase ZmPK1 (817 aa).

A signal peptide spans 1–28 (MPRPLAALLSTACILSFFIALFPRAASS). The Bulb-type lectin domain occupies 29 to 158 (RDILPLGSSL…GGNTVWQSFD (130 aa)). The Extracellular portion of the chain corresponds to 29–472 (RDILPLGSSL…HKTGGGESKW (444 aa)). N-linked (GlcNAc...) asparagine glycans are attached at residues N83, N128, N228, and N279. One can recognise an EGF-like domain in the interval 292 to 328 (MTQPCNIHGLCGPNGICHYSPTPTCSCPPGYATRNPG). 2 cysteine pairs are disulfide-bonded: C296–C308 and C302–C316. 2 N-linked (GlcNAc...) asparagine glycosylation sites follow: N329 and N339. The 83-residue stretch at 342 to 424 (CDRYDKRSMR…VRTIYLKLPT (83 aa)) folds into the PAN domain. 2 disulfide bridges follow: C376–C398 and C384–C386. N-linked (GlcNAc...) asparagine glycosylation is present at N452. The helical transmembrane segment at 473–498 (FYFYGFIAAFFVVEVSFISFAWFFVL) threads the bilayer. Residues 499 to 817 (KRELRPSELW…AVQTLLSADD (319 aa)) lie on the Cytoplasmic side of the membrane. Residues 534-817 (RKFKVELGRG…AVQTLLSADD (284 aa)) form the Protein kinase domain. ATP-binding positions include 540 to 548 (LGRGESGTV) and K562. D658 (proton acceptor) is an active-site residue.

The protein belongs to the protein kinase superfamily. Ser/Thr protein kinase family. In terms of tissue distribution, expressed predominantly in the shoots and roots of young maize seedlings, and to a lesser extent in the silks.

The protein resides in the membrane. The catalysed reaction is L-seryl-[protein] + ATP = O-phospho-L-seryl-[protein] + ADP + H(+). The enzyme catalyses L-threonyl-[protein] + ATP = O-phospho-L-threonyl-[protein] + ADP + H(+). Its function is as follows. Probable receptor. Interaction with a ligand in the extracellular domain triggers the protein kinase activity of the cytoplasmic domain. This chain is Putative receptor protein kinase ZmPK1 (PK1), found in Zea mays (Maize).